A 473-amino-acid chain; its full sequence is Glutamate--tRNA ligase (473 aa).

Positions 10–20 (PSPTGYLHLGN) match the 'HIGH' region motif. Cysteine 98, cysteine 100, cysteine 125, and histidine 127 together coordinate Zn(2+). A 'KMSKS' region motif is present at residues 242–246 (KLSKR). Residue lysine 245 participates in ATP binding.

This sequence belongs to the class-I aminoacyl-tRNA synthetase family. Glutamate--tRNA ligase type 1 subfamily. In terms of assembly, monomer. It depends on Zn(2+) as a cofactor.

The protein resides in the cytoplasm. It catalyses the reaction tRNA(Glu) + L-glutamate + ATP = L-glutamyl-tRNA(Glu) + AMP + diphosphate. In terms of biological role, catalyzes the attachment of glutamate to tRNA(Glu) in a two-step reaction: glutamate is first activated by ATP to form Glu-AMP and then transferred to the acceptor end of tRNA(Glu). In Aquifex aeolicus (strain VF5), this protein is Glutamate--tRNA ligase.